Consider the following 183-residue polypeptide: Probable chorismate pyruvate-lyase 2 (183 aa).

Positions 76, 114, and 166 each coordinate substrate.

This sequence belongs to the UbiC family.

It localises to the cytoplasm. It catalyses the reaction chorismate = 4-hydroxybenzoate + pyruvate. It functions in the pathway cofactor biosynthesis; ubiquinone biosynthesis. Its function is as follows. Removes the pyruvyl group from chorismate, with concomitant aromatization of the ring, to provide 4-hydroxybenzoate (4HB) for the ubiquinone pathway. The protein is Probable chorismate pyruvate-lyase 2 of Pseudomonas fluorescens (strain Pf0-1).